We begin with the raw amino-acid sequence, 155 residues long: Ribosomal RNA large subunit methyltransferase H (155 aa).

Residues leucine 72, glycine 103, and 122–127 each bind S-adenosyl-L-methionine; that span reads LSDLTL.

The protein belongs to the RNA methyltransferase RlmH family. As to quaternary structure, homodimer.

It is found in the cytoplasm. It catalyses the reaction pseudouridine(1915) in 23S rRNA + S-adenosyl-L-methionine = N(3)-methylpseudouridine(1915) in 23S rRNA + S-adenosyl-L-homocysteine + H(+). Its function is as follows. Specifically methylates the pseudouridine at position 1915 (m3Psi1915) in 23S rRNA. In Delftia acidovorans (strain DSM 14801 / SPH-1), this protein is Ribosomal RNA large subunit methyltransferase H.